Reading from the N-terminus, the 365-residue chain is Probable cinnamyl alcohol dehydrogenase (365 aa).

Cys47 contributes to the Zn(2+) binding site. Thr49 serves as a coordination point for NADP(+). 7 residues coordinate Zn(2+): His69, Glu70, Cys100, Cys103, Cys106, Cys114, and Cys163. Residues Thr167, 188-193 (GLGGVG), 211-216 (SSSSKK), Thr251, Gly275, and 298-300 (SFI) contribute to the NADP(+) site.

The protein belongs to the zinc-containing alcohol dehydrogenase family. As to quaternary structure, homodimer. Zn(2+) is required as a cofactor.

The catalysed reaction is (E)-cinnamyl alcohol + NADP(+) = (E)-cinnamaldehyde + NADPH + H(+). It catalyses the reaction (E)-coniferol + NADP(+) = (E)-coniferaldehyde + NADPH + H(+). It carries out the reaction (E)-sinapyl alcohol + NADP(+) = (E)-sinapaldehyde + NADPH + H(+). The enzyme catalyses (E)-4-coumaroyl alcohol + NADP(+) = (E)-4-coumaraldehyde + NADPH + H(+). The catalysed reaction is (E)-caffeyl alcohol + NADP(+) = (E)-caffeyl aldehyde + NADPH + H(+). The protein operates within aromatic compound metabolism; phenylpropanoid biosynthesis. Functionally, involved in lignin biosynthesis. Catalyzes the final step specific for the production of lignin monomers. Catalyzes the NADPH-dependent reduction of coniferaldehyde, 5-hydroxyconiferaldehyde, sinapaldehyde, 4-coumaraldehyde and caffeyl aldehyde to their respective alcohols. The protein is Probable cinnamyl alcohol dehydrogenase (CAD) of Saccharum officinarum (Sugarcane).